A 204-amino-acid polypeptide reads, in one-letter code: Peptidyl-tRNA hydrolase (204 aa).

Residue Tyr14 participates in tRNA binding. Catalysis depends on His19, which acts as the Proton acceptor. TRNA-binding residues include Tyr64, Asn66, and Asn112.

The protein belongs to the PTH family. Monomer.

It localises to the cytoplasm. It carries out the reaction an N-acyl-L-alpha-aminoacyl-tRNA + H2O = an N-acyl-L-amino acid + a tRNA + H(+). Hydrolyzes ribosome-free peptidyl-tRNAs (with 1 or more amino acids incorporated), which drop off the ribosome during protein synthesis, or as a result of ribosome stalling. Its function is as follows. Catalyzes the release of premature peptidyl moieties from peptidyl-tRNA molecules trapped in stalled 50S ribosomal subunits, and thus maintains levels of free tRNAs and 50S ribosomes. This chain is Peptidyl-tRNA hydrolase, found in Nitrobacter hamburgensis (strain DSM 10229 / NCIMB 13809 / X14).